Consider the following 350-residue polypeptide: MEVRHDWTVAEVQALFEKPFMDLVFEAQQVHRQYHEPNKVQVSTLLSIKTGACPEDCKYCPQSAHYRTDVERERLLEVEKVLDAAQKAKVSGATRFCMGAAWKNPKERDMPYLMDMIRGVKDIGLETCMTLGMITGGQADELAGAGLDYYNHNLDTSPEYYGQVITTRTYQDRLDTLSHVRDAGMKICSGGIIGMGESSRDRAGLLVELATLPTHPESVPINMLVKVKGTPMEDVEDVDPFDFIRIIAVARIIMPMSSVRLSAGREDMNEQMQTLCFMAGANSVFYGCKLLTTPNPGEDKDMQLFAKLGINSQEQAAKPDEVQEHELLGQVAQRVAARPGKDDLFYDATV.

The Radical SAM core domain maps to 38 to 257 (NKVQVSTLLS…AVARIIMPMS (220 aa)). 3 residues coordinate [4Fe-4S] cluster: C53, C57, and C60. C97, C128, C188, and R260 together coordinate [2Fe-2S] cluster.

Belongs to the radical SAM superfamily. Biotin synthase family. Homodimer. The cofactor is [4Fe-4S] cluster. [2Fe-2S] cluster serves as cofactor.

It catalyses the reaction (4R,5S)-dethiobiotin + (sulfur carrier)-SH + 2 reduced [2Fe-2S]-[ferredoxin] + 2 S-adenosyl-L-methionine = (sulfur carrier)-H + biotin + 2 5'-deoxyadenosine + 2 L-methionine + 2 oxidized [2Fe-2S]-[ferredoxin]. Its pathway is cofactor biosynthesis; biotin biosynthesis; biotin from 7,8-diaminononanoate: step 2/2. Catalyzes the conversion of dethiobiotin (DTB) to biotin by the insertion of a sulfur atom into dethiobiotin via a radical-based mechanism. The chain is Biotin synthase from Photobacterium profundum (strain SS9).